Here is a 992-residue protein sequence, read N- to C-terminus: Ankyrin repeat domain-containing protein 18A (992 aa).

ANK repeat units follow at residues 67-96, 100-129, 133-162, 166-195, and 199-228; these read KDRT…QIDI, LNRT…NPNI, YGNT…NIEA, EGNT…NIHA, and FKRT…RISS. The segment at 262–320 is disordered; it reads NHLRNDNQETAAMKPANLKKRKERAKAEHNLKVASEEKQERLQRSENKQPQDSQSYGKK. Coiled coils occupy residues 278–310, 378–618, 683–713, and 743–899; these read NLKK…ENKQ, KMIT…AERE, ISLL…CLEM, and FKKL…EAFA. Positions 286-310 are enriched in basic and acidic residues; that stretch reads AKAEHNLKVASEEKQERLQRSENKQ.

This chain is Ankyrin repeat domain-containing protein 18A (ANKRD18A), found in Homo sapiens (Human).